Here is a 317-residue protein sequence, read N- to C-terminus: D-alanine--D-alanine ligase (317 aa).

The region spanning Lys111 to Gln308 is the ATP-grasp domain. Glu137 to Thr192 serves as a coordination point for ATP. Residues Asp262, Glu275, and Asn277 each coordinate Mg(2+).

It belongs to the D-alanine--D-alanine ligase family. It depends on Mg(2+) as a cofactor. Mn(2+) serves as cofactor.

The protein resides in the cytoplasm. The catalysed reaction is 2 D-alanine + ATP = D-alanyl-D-alanine + ADP + phosphate + H(+). It participates in cell wall biogenesis; peptidoglycan biosynthesis. Cell wall formation. The chain is D-alanine--D-alanine ligase from Marinomonas sp. (strain MWYL1).